The primary structure comprises 354 residues: Short-chain dehydrogenase/reductase SAT2 (354 aa).

Isoleucine 31, aspartate 85, arginine 201, and valine 233 together coordinate NADP(+).

This sequence belongs to the short-chain dehydrogenases/reductases (SDR) family.

Its pathway is mycotoxin biosynthesis. Its function is as follows. Short-chain dehydrogenase/reductase; part of the satratoxin SC1 cluster involved in the biosynthesis of satratoxins, trichothecene mycotoxins that are associated with human food poisonings. Satratoxins are suggested to be made by products of multiple gene clusters (SC1, SC2 and SC3) that encode 21 proteins in all, including polyketide synthases, acetyltransferases, and other enzymes expected to modify the trichothecene skeleton. SC1 encodes 10 proteins, SAT1 to SAT10. The largest are SAT8, which encodes a putative polyketide synthase (PKS) with a conventional non-reducing architecture, and SAT10, a putative protein containing four ankyrin repeats and thus may be involved in protein scaffolding. The putative short-chain reductase SAT3 may assist the PKS in some capacity. SAT6 contains a secretory lipase domain and acts probably as a trichothecene esterase. SAT5 encodes a putative acetyltransferase, and so, with SAT6, may affect endogenous protection from toxicity. The probable transcription factor SAT9 may regulate the expression of the SC1 cluster. SC2 encodes proteins SAT11 to SAT16, the largest of which encodes the putative reducing PKS SAT13. SAT11 is a cytochrome P450 monooxygenase, while SAT14 and SAT16 are probable acetyltransferases. The SC2 cluster may be regulated by the transcription factor SAT15. SC3 is a small cluster that encodes 5 proteins, SAT17 to SAT21. SAT21 is a putative MFS-type transporter which may have a role in exporting secondary metabolites. The four other proteins putatively encoded in SC3 include the taurine hydroxylase-like protein SAT17, the O-methyltransferase SAT18, the acetyltransferase SAT19, and the Cys6-type zinc finger SAT20, the latter being probably involved in regulation of SC3 expression. The sequence is that of Short-chain dehydrogenase/reductase SAT2 from Stachybotrys chartarum (strain CBS 109288 / IBT 7711) (Toxic black mold).